Here is a 253-residue protein sequence, read N- to C-terminus: MSETITEVTRAEYCAIACADIFSGAGEIMASPMATLPLIGARLARLTTEPDLLITDGEALIFADTPAVGAKAPIEGWMPFRKVFDVVASGRRHVVMGANQIDRHGNQNLSAFGPLQQPTRQMFGVRGAPGNTINHPTSYWVGKHTSRVFCDTVDIVSGVGYDQIDPENPAYRFHHLHRVVSNLGVFDFGGPDHTFRALSLHPGVTADQVADNTSFEVAGLADAGVTREPTDEELRLIREVLDPRSLRDREVSV.

This sequence belongs to the 3-oxoacid CoA-transferase subunit B family. Heterotetramer composed of 2 IpdA subunits and 2 IpdB subunits.

The catalysed reaction is (3E)-2-(2-carboxylatoethyl)-3-methyl-6-oxocyclohex-1-ene-1-carboxyl-CoA + H2O = 6-methyl-3,7-dioxodecanedioyl-CoA. The protein operates within steroid metabolism; cholesterol degradation. Its function is as follows. Involved in the final steps of cholesterol and steroid degradation. Opens the last steroid ring of cholesterol by catalyzing the hydrolysis of (3E)-2-(2-carboxylatoethyl)-3-methyl-6-oxocyclohex-1-ene-1-carboxyl-CoA (COCHEA-CoA) to 6-methyl-3,7-dioxodecanedioyl-CoA (MeDODA-CoA). The protein is Cholesterol ring-cleaving hydrolase IpdB subunit of Rhodococcus jostii (strain RHA1).